A 78-amino-acid polypeptide reads, in one-letter code: Large ribosomal subunit protein bL28 (78 aa).

The protein belongs to the bacterial ribosomal protein bL28 family.

The sequence is that of Large ribosomal subunit protein bL28 from Leifsonia xyli subsp. xyli (strain CTCB07).